The following is a 101-amino-acid chain: Small ribosomal subunit protein uS14 (101 aa).

This sequence belongs to the universal ribosomal protein uS14 family. Part of the 30S ribosomal subunit. Contacts proteins S3 and S10.

Its function is as follows. Binds 16S rRNA, required for the assembly of 30S particles and may also be responsible for determining the conformation of the 16S rRNA at the A site. The protein is Small ribosomal subunit protein uS14 of Actinobacillus pleuropneumoniae serotype 5b (strain L20).